The primary structure comprises 675 residues: Serine/threonine-protein kinase ATG1 (675 aa).

Positions 25-328 (FVIGGEIGKG…FEDFFNDPVV (304 aa)) constitute a Protein kinase domain. Residues 31–39 (IGKGSFAQV) and Lys54 each bind ATP. Residue Asp168 is the Proton acceptor of the active site. Residues 339-374 (DIPKVEQKPSRDLRSLEADPQREQSELAKSPRERPL) show a composition bias toward basic and acidic residues. Disordered regions lie at residues 339–455 (DIPK…ERKL) and 501–577 (RLTS…TTRS). Composition is skewed to polar residues over residues 390-399 (ANVSARTGQS), 516-538 (ATQQ…SAVQ), and 556-565 (ASRSLNTSSA).

This sequence belongs to the protein kinase superfamily. Ser/Thr protein kinase family. APG1/unc-51/ULK1 subfamily. As to quaternary structure, homodimer. Forms a ternary complex with ATG13 and ATG17.

It is found in the cytoplasm. It localises to the preautophagosomal structure membrane. The enzyme catalyses L-seryl-[protein] + ATP = O-phospho-L-seryl-[protein] + ADP + H(+). The catalysed reaction is L-threonyl-[protein] + ATP = O-phospho-L-threonyl-[protein] + ADP + H(+). In terms of biological role, serine/threonine protein kinase involved in the cytoplasm to vacuole transport (Cvt) and found to be essential in autophagy, where it is required for the formation of autophagosomes. Involved in the clearance of protein aggregates which cannot be efficiently cleared by the proteasome. Required for selective autophagic degradation of the nucleus (nucleophagy) as well as for mitophagy which contributes to regulate mitochondrial quantity and quality by eliminating the mitochondria to a basal level to fulfill cellular energy requirements and preventing excess ROS production. Also involved in endoplasmic reticulum-specific autophagic process, in selective removal of ER-associated degradation (ERAD) substrates. Plays a key role in ATG9 and ATG23 cycling through the pre-autophagosomal structure and is necessary to promote ATG18 binding to ATG9 through phosphorylation of ATG9. Catalyzes phosphorylation of ATG4, decreasing the interaction between ATG4 and ATG8 and impairing deconjugation of PE-conjugated forms of ATG8. The sequence is that of Serine/threonine-protein kinase ATG1 from Colletotrichum lindemuthianum (Bean anthracnose fungus).